The sequence spans 161 residues: Small heat shock protein hspJ (161 aa).

Residues 52-161 (SKFTSLNPKL…FEKEIKINIE (110 aa)) form the sHSP domain.

Belongs to the small heat shock protein (HSP20) family.

The protein is Small heat shock protein hspJ (hspJ) of Dictyostelium discoideum (Social amoeba).